Reading from the N-terminus, the 842-residue chain is Elongation factor 2 (842 aa).

Positions 17–346 (TNVRNMSVIA…MIVLHLPSPV (330 aa)) constitute a tr-type G domain. GTP contacts are provided by residues 26–33 (AHVDHGKS), 158–161 (NKVD), and 213–215 (SGL). Lys509 carries the post-translational modification N6,N6,N6-trimethyllysine; by EFM3; alternate. Lys509 is modified (N6,N6-dimethyllysine; by EFM3; alternate). Residue Lys509 is modified to N6-methyllysine; by EFM3; alternate. Ser579 is subject to Phosphoserine. Lys613 is subject to N6,N6-dimethyllysine; by EFM2; alternate. An N6-methyllysine; by EFM2; alternate modification is found at Lys613. A Diphthamide modification is found at His699. Thr713 and Thr763 each carry phosphothreonine. Lys841 is covalently cross-linked (Glycyl lysine isopeptide (Lys-Gly) (interchain with G-Cter in ubiquitin)).

This sequence belongs to the TRAFAC class translation factor GTPase superfamily. Classic translation factor GTPase family. EF-G/EF-2 subfamily. As to quaternary structure, binds to 80S ribosomes. Actively translating ribosomes show mutually exclusive binding of eIF5a (HYP2 or ANB1) and EFT1/eEF2. Interacts with the 40S ribosomal subunit protein RPL9A; the interaction is direct. Interacts with the 60S ribosomal subunit proteins RPL12A; the interaction is direct. Interacts with RPS23A; the interaction is direct. Interacts with 18S rRNA; the interaction is direct. Interacts with 25S rRNA; the interaction is direct. Interacts with RPL0. Interacts with STM1; promoting ribosome inactivation. (Microbial infection) Diphthamide can be ADP-ribosylated by diphtheria toxin and by Pseudomonas exotoxin A, thus abolishing its function.

It is found in the cytoplasm. It catalyses the reaction GTP + H2O = GDP + phosphate + H(+). It functions in the pathway protein biosynthesis; polypeptide chain elongation. Inhibited by fusidic acid and sordarin, which prevent the release of eEF2 from the ribosome after the translocation step. While fusidic acid acts on all eukaryotic eEF2, sordarin specifically binds and inhibits only selected fungal eEF2. Its function is as follows. Catalyzes the GTP-dependent ribosomal translocation step during translation elongation. During this step, the ribosome changes from the pre-translocational (PRE) to the post-translocational (POST) state as the newly formed A-site-bound peptidyl-tRNA and P-site-bound deacylated tRNA move to the P and E sites, respectively. Catalyzes the coordinated movement of the two tRNA molecules, the mRNA and conformational changes in the ribosome. This is Elongation factor 2 (EFT1) from Saccharomyces cerevisiae (strain ATCC 204508 / S288c) (Baker's yeast).